Consider the following 171-residue polypeptide: Adenine phosphoribosyltransferase (171 aa).

The protein belongs to the purine/pyrimidine phosphoribosyltransferase family. Homodimer.

The protein resides in the cytoplasm. The enzyme catalyses AMP + diphosphate = 5-phospho-alpha-D-ribose 1-diphosphate + adenine. It functions in the pathway purine metabolism; AMP biosynthesis via salvage pathway; AMP from adenine: step 1/1. Its function is as follows. Catalyzes a salvage reaction resulting in the formation of AMP, that is energically less costly than de novo synthesis. In Acetivibrio thermocellus (strain ATCC 27405 / DSM 1237 / JCM 9322 / NBRC 103400 / NCIMB 10682 / NRRL B-4536 / VPI 7372) (Clostridium thermocellum), this protein is Adenine phosphoribosyltransferase.